The following is a 224-amino-acid chain: Claudin-19 (224 aa).

Residues Met1–Gln7 are Cytoplasmic-facing. A helical transmembrane segment spans residues Leu8–Pro28. The Extracellular segment spans residues Gln29–Arg81. A disulfide bridge links Cys54 with Cys64. A helical membrane pass occupies residues Ala82–Met102. The Cytoplasmic segment spans residues Lys103–Arg117. A helical transmembrane segment spans residues Val118–Ser138. The Extracellular portion of the chain corresponds to Trp139–Glu160. Residues Phe161–Phe181 traverse the membrane as a helical segment. Over Leu182–Val224 the chain is Cytoplasmic.

Belongs to the claudin family. Can form homo- and heteropolymeric tight junction strands. Interacts with other claudins including CLDN3, CLDN10, CLDN16 and CLDN18 with highest affinity for CLDN16. Interacts (via PDZ-binding motif TRV) with TJP1 (via PDZ domain).

The protein localises to the cell junction. It localises to the tight junction. It is found in the cell membrane. The enzyme catalyses Mg(2+)(in) = Mg(2+)(out). It carries out the reaction Ca(2+)(in) = Ca(2+)(out). It catalyses the reaction Na(+)(in) = Na(+)(out). The catalysed reaction is K(+)(in) = K(+)(out). The enzyme catalyses Rb(+)(in) = Rb(+)(out). It carries out the reaction Cs(+)(in) = Cs(+)(out). It catalyses the reaction Li(+)(in) = Li(+)(out). Its function is as follows. Forms paracellular channels: coassembles with CLDN16 into tight junction strands with cation-selective channels through the strands, conveying epithelial permeability in a process known as paracellular tight junction permeability. Involved in the maintenance of ion gradients along the nephron. In the thick ascending limb (TAL) of Henle's loop, facilitates sodium paracellular permeability from the interstitial compartment to the lumen, contributing to the lumen-positive transepithelial potential that drives paracellular magnesium and calcium reabsorption. Forms paracellular barriers on its own. In the peripheral nervous system, represents a major constituent of the tight junctions in Schwann cells and contributes to electrical sealing. During retinal neurogenesis, may regulate the barrier properties of tight junctions in retinal pigment epithelium, required for proper retinal tissue differentiation and vision. This Rattus norvegicus (Rat) protein is Claudin-19.